We begin with the raw amino-acid sequence, 158 residues long: Endoribonuclease YbeY (158 aa).

Zn(2+)-binding residues include histidine 119, histidine 123, and histidine 129.

The protein belongs to the endoribonuclease YbeY family. Zn(2+) is required as a cofactor.

The protein localises to the cytoplasm. Its function is as follows. Single strand-specific metallo-endoribonuclease involved in late-stage 70S ribosome quality control and in maturation of the 3' terminus of the 16S rRNA. The polypeptide is Endoribonuclease YbeY (Acinetobacter baumannii (strain AB307-0294)).